The chain runs to 144 residues: D-aminoacyl-tRNA deacylase (144 aa).

The Gly-cisPro motif, important for rejection of L-amino acids motif lies at 136 to 137; sequence GP.

The protein belongs to the DTD family. Homodimer.

It localises to the cytoplasm. The enzyme catalyses glycyl-tRNA(Ala) + H2O = tRNA(Ala) + glycine + H(+). The catalysed reaction is a D-aminoacyl-tRNA + H2O = a tRNA + a D-alpha-amino acid + H(+). Its function is as follows. An aminoacyl-tRNA editing enzyme that deacylates mischarged D-aminoacyl-tRNAs. Also deacylates mischarged glycyl-tRNA(Ala), protecting cells against glycine mischarging by AlaRS. Acts via tRNA-based rather than protein-based catalysis; rejects L-amino acids rather than detecting D-amino acids in the active site. By recycling D-aminoacyl-tRNA to D-amino acids and free tRNA molecules, this enzyme counteracts the toxicity associated with the formation of D-aminoacyl-tRNA entities in vivo and helps enforce protein L-homochirality. This Mannheimia succiniciproducens (strain KCTC 0769BP / MBEL55E) protein is D-aminoacyl-tRNA deacylase.